A 468-amino-acid chain; its full sequence is Two-component response regulator-like APRR9 (468 aa).

Residues 38 to 156 (RVLLVESDYS…ELKNLWQHVW (119 aa)) enclose the Response regulatory domain. Composition is skewed to polar residues over residues 168–177 (HAQSLPASQH) and 194–203 (DQGSGAQAIN). Disordered regions lie at residues 168–203 (HAQS…QAIN), 302–416 (VVAL…SRSQ), and 442–468 (RKKL…STKS). Residues 315-327 (TPTESHEKLRKVT) are compositionally biased toward basic and acidic residues. The span at 328–364 (SDQGSATTSSNQENIGSSSVSFRNQVLQSTVTNQKQD) shows a compositional bias: polar residues. Composition is skewed to basic and acidic residues over residues 371–382 (SNREKAASKEVE) and 400–409 (EKPKEEESAK). Residues 417 to 459 (REAALMKFRLKRKDRCFDKKVRYQSRKKLAEQRPRVKGQFVRT) form the CCT domain. A compositionally biased stretch (polar residues) spans 458–468 (RTVNSDASTKS).

It belongs to the ARR-like family. In terms of processing, phosphorylated. Phosphorylation varies throughout the diurnal cycle.

It is found in the nucleus. Its function is as follows. Transcriptional repressor of CCA1 and LHY, and positive regulator of LWD1 and LWD2 expression. Controls photoperiodic flowering response and temperature compensation. Involved in the positive and negative feedback loops of the circadian clock. Expression of several members of the ARR-like family is controlled by circadian rhythm. Regulated at the transcriptional level by a corepressor complex consisting of ELF4, ELF3, and LUX. APRR9, APRR7, and APRR5 coordinately act on the upstream region of the target genes to repress their expression from noon until midnight. The particular coordinated sequential expression of APRR9, APRR7, APRR5, APRR3 and APPR1 result to circadian waves that may be at the basis of the endogenous circadian clock. The polypeptide is Two-component response regulator-like APRR9 (APRR9) (Arabidopsis thaliana (Mouse-ear cress)).